The chain runs to 457 residues: Aromatic amino acid transport protein AroP (457 aa).

Residues 1–20 (MMDSQQHGEQLKRGLKNRHI) lie on the Cytoplasmic side of the membrane. Residues 21–41 (QLIALGGAIGTGLFLGSASVI) form a helical membrane-spanning segment. Position 42 (Q42) is a topological domain, periplasmic. A helical transmembrane segment spans residues 43-63 (SAGPGIILGYAIAGFIAFLIM). Residues 64-86 (RQLGEMVVEEPVAGSFSHFAYKY) lie on the Cytoplasmic side of the membrane. A helical membrane pass occupies residues 87–107 (WGGFAGFASGWNYWVLYVLVA). The Periplasmic portion of the chain corresponds to 108-117 (MAELTAVGKY). Residues 118-138 (IQFWYPEIPTWASAAAFFVII) form a helical membrane-spanning segment. Residues 139 to 155 (NAINLTNVKVFGEMEFW) are Cytoplasmic-facing. Residues 156 to 176 (FAIIKVIAVIAMILFGAWLLF) traverse the membrane as a helical segment. Topologically, residues 177 to 201 (SDTAGPQATVRNLWEQGGFLPHGWT) are periplasmic. A helical membrane pass occupies residues 202–222 (GLVMMMAIIMFSFGGLELVGI). The Cytoplasmic segment spans residues 223-240 (TAAEADNPEQSIPKATNQ). A helical membrane pass occupies residues 241-261 (VIYRILIFYIGSLAVLLSLLP). The Periplasmic segment spans residues 262–271 (WTRVTADTSP). Residues 272–292 (FVLIFHELGDTFVANALNIVV) traverse the membrane as a helical segment. Residues 293–333 (LTAALSVYNSCVYCNSRMLFGLAQQGNAPKALLNVDKRGVP) are Cytoplasmic-facing. The chain crosses the membrane as a helical span at residues 334 to 354 (VSSILVSAVVTALCVLLNYLA). At 355–358 (PESA) the chain is on the periplasmic side. Residues 359 to 379 (FGLLMALVVSALVINWAMISL) traverse the membrane as a helical segment. The Cytoplasmic segment spans residues 380–400 (AHMMFRRAKQQQGVKTRFPAL). Residues 401–421 (FYPFGNVLCLLFMAAVLIIML) form a helical membrane-spanning segment. The Periplasmic portion of the chain corresponds to 422–425 (MTPG). A helical membrane pass occupies residues 426–446 (MAISVWLIPVWLLILGVGYLC). Over 447–457 (KEKTAKTVKAH) the chain is Cytoplasmic.

Belongs to the amino acid-polyamine-organocation (APC) superfamily. Amino acid transporter (AAT) (TC 2.A.3.1) family.

It is found in the cell inner membrane. The enzyme catalyses L-phenylalanine(in) + H(+)(in) = L-phenylalanine(out) + H(+)(out). It catalyses the reaction L-tryptophan(in) + H(+)(in) = L-tryptophan(out) + H(+)(out). The catalysed reaction is L-tyrosine(in) + H(+)(in) = L-tyrosine(out) + H(+)(out). In terms of biological role, permease that is involved in the active transport across the cytoplasmic membrane of all three aromatic amino acids, phenylalanine, tyrosine and tryptophan. The chain is Aromatic amino acid transport protein AroP (aroP) from Salmonella typhi.